Consider the following 781-residue polypeptide: Cadherin-24 (781 aa).

Residues 1–22 (MWGLVRLLLAWLGGWGCMGRLA) form the signal peptide. A propeptide spanning residues 23 to 44 (APVPAWAGSRGHSGPTLLRTRR) is cleaved from the precursor. Over 45 to 603 (SWVWNQFFVI…LSPTGLSTGA (559 aa)) the chain is Extracellular. Cadherin domains lie at 46–150 (WVWN…PPVF), 151–259 (PLGP…PPKF), 260–374 (PQSL…PPAF), 375–479 (TQAT…APQL), and 479–592 (LAEP…WPEA). N-linked (GlcNAc...) asparagine glycans are attached at residues N446, N510, and N525. A helical membrane pass occupies residues 604–624 (LLAIVTCMGTLLALVVLFVAL). The Cytoplasmic segment spans residues 625 to 781 (RRQKQEALMV…LYGAKEPPAP (157 aa)). 2 disordered regions span residues 665-700 (LQNP…PGPA) and 731-762 (EGRG…LDDW). Low complexity predominate over residues 733 to 746 (RGSSCGSLSSLGSG).

As to quaternary structure, associates with alpha-, beta- and delta-catenins.

Its subcellular location is the cell membrane. Functionally, cadherins are calcium-dependent cell adhesion proteins. They preferentially interact with themselves in a homophilic manner in connecting cells; cadherins may thus contribute to the sorting of heterogeneous cell types. Cadherin-24 mediate strong cell-cell adhesion. In Mus musculus (Mouse), this protein is Cadherin-24 (Cdh24).